A 404-amino-acid polypeptide reads, in one-letter code: Nicotinate phosphoribosyltransferase (404 aa).

Position 225 is a phosphohistidine; by autocatalysis (His225).

The protein belongs to the NAPRTase family. Transiently phosphorylated on a His residue during the reaction cycle. Phosphorylation strongly increases the affinity for substrates and increases the rate of nicotinate D-ribonucleotide production. Dephosphorylation regenerates the low-affinity form of the enzyme, leading to product release.

The enzyme catalyses nicotinate + 5-phospho-alpha-D-ribose 1-diphosphate + ATP + H2O = nicotinate beta-D-ribonucleotide + ADP + phosphate + diphosphate. Its pathway is cofactor biosynthesis; NAD(+) biosynthesis; nicotinate D-ribonucleotide from nicotinate: step 1/1. Functionally, catalyzes the synthesis of beta-nicotinate D-ribonucleotide from nicotinate and 5-phospho-D-ribose 1-phosphate at the expense of ATP. This chain is Nicotinate phosphoribosyltransferase, found in Acinetobacter baumannii (strain ATCC 17978 / DSM 105126 / CIP 53.77 / LMG 1025 / NCDC KC755 / 5377).